The following is a 341-amino-acid chain: tRNA N6-adenosine threonylcarbamoyltransferase (341 aa).

His111 and His115 together coordinate Fe cation. Residues 134-138 (LVSGG), Asp167, Gly180, and Asn274 contribute to the substrate site. Asp302 is a Fe cation binding site.

This sequence belongs to the KAE1 / TsaD family. Fe(2+) serves as cofactor.

Its subcellular location is the cytoplasm. It catalyses the reaction L-threonylcarbamoyladenylate + adenosine(37) in tRNA = N(6)-L-threonylcarbamoyladenosine(37) in tRNA + AMP + H(+). Its function is as follows. Required for the formation of a threonylcarbamoyl group on adenosine at position 37 (t(6)A37) in tRNAs that read codons beginning with adenine. Is involved in the transfer of the threonylcarbamoyl moiety of threonylcarbamoyl-AMP (TC-AMP) to the N6 group of A37, together with TsaE and TsaB. TsaD likely plays a direct catalytic role in this reaction. The chain is tRNA N6-adenosine threonylcarbamoyltransferase from Paraburkholderia phymatum (strain DSM 17167 / CIP 108236 / LMG 21445 / STM815) (Burkholderia phymatum).